The chain runs to 623 residues: MSKVIGIDLGTTNSAVAVLEGKEPKIITNPEGNRTTPSVVAFKNGEIQVGEVAKRQAITNPNTIVSIKSHMGEEGYKVKVGDKEYTPQEISAFILQYIKKFSEDYLGEKVTDAVITVPAYFNDAQRQATKDAGKIAGLNVQRIINEPTASALAYGLDKDENDEKVLVYDLGGGTFDVSILQLGDGVFQVLSTNGDTHLGGDDFDKRIMDWLIQNFKEENGVDLSNDKMALQRLKDAAEKAKKDLSGVSSTNISLPFISAGEAGPLHLEADLTRAKFDELTDDLVQKTKIAFDNALSDAGLSVSDIDKVILNGGSTRIPAVQKAVKEWAGKEPDHSINPDEAVALGAAIQGGVISGDVKDIVLLDVTPLSLGIETMGGVFTKLIDRNTTIPTSKSQIFSTAADNQPAVDVHVLQGERPMAADDKTLGRFELTDIPPAPRGVPQIQVTFDIDKNGIVNVSAKDMGTGKEQKITIKSSSGLSDEEIKKMQKDAEEHAEEDKKRKEEVDLRNEVDQLIFTTEKTLKETKGKVPETETKNVQDALDALKKAQKDNNLDEMKEKKEALSKAAQDLAVKLYQQNGGAQGAAGQAGPQGAQGGQPNNDNGSSNGQGGSTVDGDFHKVDPDK.

Residue Thr-174 is modified to Phosphothreonine; by autocatalysis. Disordered regions lie at residues 470 to 504 (ITIKSSSGLSDEEIKKMQKDAEEHAEEDKKRKEEV) and 578 to 623 (GGAQ…DPDK). Residues 481 to 504 (EEIKKMQKDAEEHAEEDKKRKEEV) show a composition bias toward basic and acidic residues. Positions 578–604 (GGAQGAAGQAGPQGAQGGQPNNDNGSS) are enriched in low complexity. Residues 614–623 (GDFHKVDPDK) show a composition bias toward basic and acidic residues.

This sequence belongs to the heat shock protein 70 family.

Acts as a chaperone. The sequence is that of Chaperone protein DnaK from Lactobacillus gasseri (strain ATCC 33323 / DSM 20243 / BCRC 14619 / CIP 102991 / JCM 1131 / KCTC 3163 / NCIMB 11718 / NCTC 13722 / AM63).